The primary structure comprises 159 residues: Capsid protein (159 aa).

Position 2 is an N-acetylserine; by host (Ser2).

It belongs to the virgaviridae capsid protein family.

The protein localises to the virion. Capsid protein self-assembles to form rod-shaped virions about 18 nm in diameter with a central canal enclosing the viral genomic RNA. The sequence is that of Capsid protein (CP) from Nicotiana tabacum (Common tobacco).